The chain runs to 282 residues: 4-hydroxybenzoate octaprenyltransferase (282 aa).

The next 9 membrane-spanning stretches (helical) occupy residues 17 to 37 (IGIL…NQGF), 40 to 60 (IDLL…GCVI), 90 to 110 (AFIL…KLPI), 113 to 133 (FYFA…KRFL), 135 to 155 (APQL…FIAS), 163 to 183 (FIVL…MYAM), 207 to 227 (LIIA…AINK), 231 to 251 (WFFY…LKLI), and 262 to 282 (AFLV…LALI).

Belongs to the UbiA prenyltransferase family. The cofactor is Mg(2+).

Its subcellular location is the cell inner membrane. The catalysed reaction is all-trans-octaprenyl diphosphate + 4-hydroxybenzoate = 4-hydroxy-3-(all-trans-octaprenyl)benzoate + diphosphate. It functions in the pathway cofactor biosynthesis; ubiquinone biosynthesis. Its function is as follows. Catalyzes the prenylation of para-hydroxybenzoate (PHB) with an all-trans polyprenyl group. Mediates the second step in the final reaction sequence of ubiquinone-8 (UQ-8) biosynthesis, which is the condensation of the polyisoprenoid side chain with PHB, generating the first membrane-bound Q intermediate 3-octaprenyl-4-hydroxybenzoate. The chain is 4-hydroxybenzoate octaprenyltransferase from Legionella pneumophila subsp. pneumophila (strain Philadelphia 1 / ATCC 33152 / DSM 7513).